Here is a 227-residue protein sequence, read N- to C-terminus: MKFAVIVFPGSNCDLDMYHAVKDALGEEVEYVFHTETSLEGYDGVLLPGGFSYGDYLRCGAIAQFSPIMEEVKRFAAEGKTVLGVCNGFQILVEAGLLPGVLHRNTGLKFMCRTVELKVENNETRFTSDYAAQETITIPIAHGEGNYYCDDATYAMLQTNRQIAFTYTDNPNGSRGDIAGITNKAGNVLGMMPHPERAVELLTGGTDGLKLFTSLVKQGAHHVKTTV.

In terms of domain architecture, Glutamine amidotransferase type-1 spans 3–225 (FAVIVFPGSN…VKQGAHHVKT (223 aa)). C86 functions as the Nucleophile in the catalytic mechanism. Residues H194 and E196 contribute to the active site.

Part of the FGAM synthase complex composed of 1 PurL, 1 PurQ and 2 PurS subunits.

It is found in the cytoplasm. It catalyses the reaction N(2)-formyl-N(1)-(5-phospho-beta-D-ribosyl)glycinamide + L-glutamine + ATP + H2O = 2-formamido-N(1)-(5-O-phospho-beta-D-ribosyl)acetamidine + L-glutamate + ADP + phosphate + H(+). It carries out the reaction L-glutamine + H2O = L-glutamate + NH4(+). It participates in purine metabolism; IMP biosynthesis via de novo pathway; 5-amino-1-(5-phospho-D-ribosyl)imidazole from N(2)-formyl-N(1)-(5-phospho-D-ribosyl)glycinamide: step 1/2. In terms of biological role, part of the phosphoribosylformylglycinamidine synthase complex involved in the purines biosynthetic pathway. Catalyzes the ATP-dependent conversion of formylglycinamide ribonucleotide (FGAR) and glutamine to yield formylglycinamidine ribonucleotide (FGAM) and glutamate. The FGAM synthase complex is composed of three subunits. PurQ produces an ammonia molecule by converting glutamine to glutamate. PurL transfers the ammonia molecule to FGAR to form FGAM in an ATP-dependent manner. PurS interacts with PurQ and PurL and is thought to assist in the transfer of the ammonia molecule from PurQ to PurL. The protein is Phosphoribosylformylglycinamidine synthase subunit PurQ of Exiguobacterium sibiricum (strain DSM 17290 / CCUG 55495 / CIP 109462 / JCM 13490 / 255-15).